We begin with the raw amino-acid sequence, 256 residues long: NAD-dependent protein deacetylase (256 aa).

Residues 1–254 (MDISYHEKIS…KDILDVIKSE (254 aa)) form the Deacetylase sirtuin-type domain. NAD(+) contacts are provided by Ala-28, Thr-32, Phe-39, Arg-40, Gln-105, Ile-107, Asp-108, and His-123. Phe-39 is a binding site for nicotinamide. Residues Ile-107 and Asp-108 each contribute to the nicotinamide site. The Proton acceptor role is filled by His-123. Residues Cys-131, Cys-134, Cys-156, and Cys-159 each coordinate Zn(2+). NAD(+) is bound by residues Thr-197, Ser-198, and Asn-222.

Belongs to the sirtuin family. Class U subfamily. Requires Zn(2+) as cofactor.

It localises to the cytoplasm. The catalysed reaction is N(6)-acetyl-L-lysyl-[protein] + NAD(+) + H2O = 2''-O-acetyl-ADP-D-ribose + nicotinamide + L-lysyl-[protein]. NAD-dependent protein deacetylase which modulates the activities of several enzymes which are inactive in their acetylated form. This Thermodesulfovibrio yellowstonii (strain ATCC 51303 / DSM 11347 / YP87) protein is NAD-dependent protein deacetylase.